A 127-amino-acid polypeptide reads, in one-letter code: Large ribosomal subunit protein bL21c (127 aa).

Belongs to the bacterial ribosomal protein bL21 family. As to quaternary structure, part of the 50S ribosomal subunit.

The protein localises to the plastid. It is found in the chloroplast. Functionally, this protein binds to 23S rRNA. This Adiantum capillus-veneris (Maidenhair fern) protein is Large ribosomal subunit protein bL21c.